We begin with the raw amino-acid sequence, 181 residues long: GTP cyclohydrolase 1 2 (181 aa).

The protein belongs to the GTP cyclohydrolase I family. In terms of assembly, homomer.

It catalyses the reaction GTP + H2O = 7,8-dihydroneopterin 3'-triphosphate + formate + H(+). It participates in cofactor biosynthesis; 7,8-dihydroneopterin triphosphate biosynthesis; 7,8-dihydroneopterin triphosphate from GTP: step 1/1. This chain is GTP cyclohydrolase 1 2, found in Pseudomonas syringae pv. tomato (strain ATCC BAA-871 / DC3000).